Reading from the N-terminus, the 666-residue chain is DNA-directed RNA polymerase III subunit rpc3 (666 aa).

2 disordered regions span residues 130–153 (HEPHANGNSNETNGATNGNGVHSY) and 375–455 (SRLD…TESR). A compositionally biased stretch (polar residues) spans 135–153 (NGNSNETNGATNGNGVHSY). Residues 593–614 (TYKAMSRCLQRLDVEKRRKANI) are leucine-zipper.

It belongs to the RNA polymerase beta chain family. Component of the RNA polymerase III (Pol III) complex consisting of 17 subunits.

It localises to the nucleus. Functionally, DNA-dependent RNA polymerase catalyzes the transcription of DNA into RNA using the four ribonucleoside triphosphates as substrates. Specific core component of RNA polymerase III which synthesizes small RNAs, such as 5S rRNA and tRNAs. In Botryotinia fuckeliana (strain B05.10) (Noble rot fungus), this protein is DNA-directed RNA polymerase III subunit rpc3 (rpc82).